Reading from the N-terminus, the 224-residue chain is Transmembrane protein C16orf54 (224 aa).

Residue threonine 4 is glycosylated (O-linked (GalNAc...) threonine). Residues 32-52 (IPIMLVLATLAALFILTTAVL) traverse the membrane as a helical segment. 2 disordered regions span residues 104-138 (TDRAPEPPTQVGTLEARATAPPAPSAPNSAPSNLG) and 152-203 (WGPQ…GLQP). Phosphothreonine is present on residues threonine 112 and threonine 116. Serine 194 is subject to Phosphoserine.

In terms of processing, O-glycosylated with core 1 or possibly core 8 glycans.

The protein resides in the membrane. The polypeptide is Transmembrane protein C16orf54 (C16orf54) (Homo sapiens (Human)).